A 332-amino-acid polypeptide reads, in one-letter code: Ribosomal RNA small subunit methyltransferase C (332 aa).

This sequence belongs to the methyltransferase superfamily. RsmC family. Monomer.

Its subcellular location is the cytoplasm. The catalysed reaction is guanosine(1207) in 16S rRNA + S-adenosyl-L-methionine = N(2)-methylguanosine(1207) in 16S rRNA + S-adenosyl-L-homocysteine + H(+). In terms of biological role, specifically methylates the guanine in position 1207 of 16S rRNA in the 30S particle. The polypeptide is Ribosomal RNA small subunit methyltransferase C (Pseudomonas fluorescens (strain ATCC BAA-477 / NRRL B-23932 / Pf-5)).